The sequence spans 175 residues: ATP synthase subunit b 2 (175 aa).

Residues 20–40 (LIFWTTITFVLVLIILKKIAW) traverse the membrane as a helical segment.

This sequence belongs to the ATPase B chain family. As to quaternary structure, F-type ATPases have 2 components, F(1) - the catalytic core - and F(0) - the membrane proton channel. F(1) has five subunits: alpha(3), beta(3), gamma(1), delta(1), epsilon(1). F(0) has four main subunits: a(1), b(2) and c(10-14). The alpha and beta chains form an alternating ring which encloses part of the gamma chain. F(1) is attached to F(0) by a central stalk formed by the gamma and epsilon chains, while a peripheral stalk is formed by the delta and b chains.

The protein resides in the cell inner membrane. Functionally, f(1)F(0) ATP synthase produces ATP from ADP in the presence of a proton or sodium gradient. F-type ATPases consist of two structural domains, F(1) containing the extramembraneous catalytic core and F(0) containing the membrane proton channel, linked together by a central stalk and a peripheral stalk. During catalysis, ATP synthesis in the catalytic domain of F(1) is coupled via a rotary mechanism of the central stalk subunits to proton translocation. Its function is as follows. Component of the F(0) channel, it forms part of the peripheral stalk, linking F(1) to F(0). The sequence is that of ATP synthase subunit b 2 from Chlorobium luteolum (strain DSM 273 / BCRC 81028 / 2530) (Pelodictyon luteolum).